The following is a 549-amino-acid chain: Glucose-6-phosphate isomerase (549 aa).

Glu-355 serves as the catalytic Proton donor. Residues His-387 and Lys-515 contribute to the active site.

It belongs to the GPI family.

The protein resides in the cytoplasm. It catalyses the reaction alpha-D-glucose 6-phosphate = beta-D-fructose 6-phosphate. Its pathway is carbohydrate biosynthesis; gluconeogenesis. It functions in the pathway carbohydrate degradation; glycolysis; D-glyceraldehyde 3-phosphate and glycerone phosphate from D-glucose: step 2/4. Functionally, catalyzes the reversible isomerization of glucose-6-phosphate to fructose-6-phosphate. This is Glucose-6-phosphate isomerase from Haemophilus influenzae (strain PittEE).